Here is a 100-residue protein sequence, read N- to C-terminus: Urease subunit gamma (100 aa).

This sequence belongs to the urease gamma subunit family. In terms of assembly, heterotrimer of UreA (gamma), UreB (beta) and UreC (alpha) subunits. Three heterotrimers associate to form the active enzyme.

It localises to the cytoplasm. The enzyme catalyses urea + 2 H2O + H(+) = hydrogencarbonate + 2 NH4(+). It participates in nitrogen metabolism; urea degradation; CO(2) and NH(3) from urea (urease route): step 1/1. In Streptomyces griseus subsp. griseus (strain JCM 4626 / CBS 651.72 / NBRC 13350 / KCC S-0626 / ISP 5235), this protein is Urease subunit gamma.